The following is a 2514-amino-acid chain: Probable polyketide synthase 8/35 (2514 aa).

The Ketosynthase family 3 (KS3) domain occupies D11 to E442. Residues C181, H323, and H362 each act as for beta-ketoacyl synthase activity in the active site. Residues G635–Y668 form an acyl/malonyl transferase region. Catalysis depends on S645, which acts as the For acyl/malonyl transferase activity. The N-terminal hotdog fold stretch occupies residues I925 to N1047. Residues I925–S1209 form the PKS/mFAS DH domain. Catalysis depends on H959, which acts as the Proton acceptor; for dehydratase activity. The C-terminal hotdog fold stretch occupies residues N1064 to S1209. The Proton donor; for dehydratase activity role is filled by D1122. The Carrier domain occupies I2431–L2508. S2468 is subject to O-(pantetheine 4'-phosphoryl)serine.

Pantetheine 4'-phosphate is required as a cofactor.

Functionally, probable polyketide synthase. The protein is Probable polyketide synthase 8/35 (pks8) of Dictyostelium discoideum (Social amoeba).